We begin with the raw amino-acid sequence, 197 residues long: Protein GrpE (197 aa).

The segment at 1–41 (MSSKEQKTPEGQAPEEIITEQHEEVEAVEPDASAEQVDPRD) is disordered.

The protein belongs to the GrpE family. In terms of assembly, homodimer.

It is found in the cytoplasm. In terms of biological role, participates actively in the response to hyperosmotic and heat shock by preventing the aggregation of stress-denatured proteins, in association with DnaK and GrpE. It is the nucleotide exchange factor for DnaK and may function as a thermosensor. Unfolded proteins bind initially to DnaJ; upon interaction with the DnaJ-bound protein, DnaK hydrolyzes its bound ATP, resulting in the formation of a stable complex. GrpE releases ADP from DnaK; ATP binding to DnaK triggers the release of the substrate protein, thus completing the reaction cycle. Several rounds of ATP-dependent interactions between DnaJ, DnaK and GrpE are required for fully efficient folding. This is Protein GrpE from Enterobacter sp. (strain 638).